Reading from the N-terminus, the 398-residue chain is Arginine biosynthesis bifunctional protein ArgJ (398 aa).

Substrate-binding residues include threonine 148, lysine 174, threonine 185, glutamate 271, asparagine 393, and threonine 398. Threonine 185 functions as the Nucleophile in the catalytic mechanism.

Belongs to the ArgJ family. Heterotetramer of two alpha and two beta chains.

Its subcellular location is the cytoplasm. It catalyses the reaction N(2)-acetyl-L-ornithine + L-glutamate = N-acetyl-L-glutamate + L-ornithine. The enzyme catalyses L-glutamate + acetyl-CoA = N-acetyl-L-glutamate + CoA + H(+). Its pathway is amino-acid biosynthesis; L-arginine biosynthesis; L-ornithine and N-acetyl-L-glutamate from L-glutamate and N(2)-acetyl-L-ornithine (cyclic): step 1/1. It functions in the pathway amino-acid biosynthesis; L-arginine biosynthesis; N(2)-acetyl-L-ornithine from L-glutamate: step 1/4. Catalyzes two activities which are involved in the cyclic version of arginine biosynthesis: the synthesis of N-acetylglutamate from glutamate and acetyl-CoA as the acetyl donor, and of ornithine by transacetylation between N(2)-acetylornithine and glutamate. The polypeptide is Arginine biosynthesis bifunctional protein ArgJ (Listeria monocytogenes serovar 1/2a (strain ATCC BAA-679 / EGD-e)).